An 81-amino-acid polypeptide reads, in one-letter code: Photosystem I iron-sulfur center (81 aa).

4Fe-4S ferredoxin-type domains are found at residues 2–31 (SHTVKIYDTCIGCTQCVRACPTDVLEMVPW) and 39–68 (IASAPRTEDCVGCKRCESACPTDFLSVRVY). Positions 11, 14, 17, 21, 48, 51, 54, and 58 each coordinate [4Fe-4S] cluster.

In terms of assembly, the eukaryotic PSI reaction center is composed of at least 11 subunits. [4Fe-4S] cluster is required as a cofactor.

The protein localises to the plastid. Its subcellular location is the chloroplast thylakoid membrane. The catalysed reaction is reduced [plastocyanin] + hnu + oxidized [2Fe-2S]-[ferredoxin] = oxidized [plastocyanin] + reduced [2Fe-2S]-[ferredoxin]. Its function is as follows. Apoprotein for the two 4Fe-4S centers FA and FB of photosystem I (PSI); essential for photochemical activity. FB is the terminal electron acceptor of PSI, donating electrons to ferredoxin. The C-terminus interacts with PsaA/B/D and helps assemble the protein into the PSI complex. Required for binding of PsaD and PsaE to PSI. PSI is a plastocyanin/cytochrome c6-ferredoxin oxidoreductase, converting photonic excitation into a charge separation, which transfers an electron from the donor P700 chlorophyll pair to the spectroscopically characterized acceptors A0, A1, FX, FA and FB in turn. The sequence is that of Photosystem I iron-sulfur center from Chlorella vulgaris (Green alga).